A 314-amino-acid chain; its full sequence is Methionyl-tRNA formyltransferase (314 aa).

Residue 112-115 (SLLP) participates in (6S)-5,6,7,8-tetrahydrofolate binding.

The protein belongs to the Fmt family.

It carries out the reaction L-methionyl-tRNA(fMet) + (6R)-10-formyltetrahydrofolate = N-formyl-L-methionyl-tRNA(fMet) + (6S)-5,6,7,8-tetrahydrofolate + H(+). In terms of biological role, attaches a formyl group to the free amino group of methionyl-tRNA(fMet). The formyl group appears to play a dual role in the initiator identity of N-formylmethionyl-tRNA by promoting its recognition by IF2 and preventing the misappropriation of this tRNA by the elongation apparatus. This Buchnera aphidicola subsp. Acyrthosiphon pisum (strain 5A) protein is Methionyl-tRNA formyltransferase.